The primary structure comprises 296 residues: (3R)-3-[(carboxymethyl)amino]fatty acid oxygenase/decarboxylase (296 aa).

3 residues coordinate (3R)-3-[(carboxymethyl)amino]butanoate: Tyr-66, Tyr-71, and Gly-98. Residues Tyr-66, Tyr-71, and Gly-98 each coordinate (3R)-3-{[carboxy(hydroxy)methyl]amino}butanoate. Fe(2+) contacts are provided by His-102 and Asp-104. The (3R)-3-[(carboxymethyl)amino]butanoate site is built by Tyr-105 and Lys-163. Positions 105 and 163 each coordinate (3R)-3-{[carboxy(hydroxy)methyl]amino}butanoate. Fe(2+) is bound at residue His-265. His-269 is a 2-oxoglutarate binding site. Arg-280 provides a ligand contact to (3R)-3-[(carboxymethyl)amino]butanoate. Position 280 (Arg-280) interacts with (3R)-3-{[carboxy(hydroxy)methyl]amino}butanoate.

The protein belongs to the TfdA dioxygenase family. The cofactor is Fe(2+).

The enzyme catalyses a (3R)-3-[(carboxymethyl)amino]fatty acid + 2 2-oxoglutarate + 2 O2 = a (3R)-3-isocyanyl-fatty acid + 2 succinate + 3 CO2 + 2 H2O. It carries out the reaction a (3R)-3-[(carboxymethyl)amino]fatty acid + 2-oxoglutarate + O2 = a (3R)-3-{[carboxy(hydroxy)methyl]amino}fatty acid + succinate + CO2. The catalysed reaction is a (3R)-3-{[carboxy(hydroxy)methyl]amino}fatty acid + 2-oxoglutarate + O2 = a (3R)-3-isocyanyl-fatty acid + succinate + 2 CO2 + 2 H2O. It catalyses the reaction (3R)-3-[(carboxymethyl)amino]butanoate + 2 2-oxoglutarate + 2 O2 = (3R)-3-isocyanylbutanoate + 2 succinate + 3 CO2 + 2 H2O. The enzyme catalyses (3R)-3-[(carboxymethyl)amino]butanoate + 2-oxoglutarate + O2 = (3R)-3-{[carboxy(hydroxy)methyl]amino}butanoate + succinate + CO2. It carries out the reaction (3R)-3-{[carboxy(hydroxy)methyl]amino}butanoate + 2-oxoglutarate + O2 = (3R)-3-isocyanylbutanoate + succinate + 2 CO2 + 2 H2O. In terms of biological role, involved in the biosynthesis of a unique class of isonitrile lipopeptides (INLPs). Catalyzes the conversion of (3R)-3-[(carboxymethyl)amino]fatty acids such as (3R)-3-[(carboxymethyl)amino]butanoate (CABA) to (3R)-3-isocyanylbutanoate (INBA) through an oxidative decarboxylation mechanism, thereby generating the isonitrile group of INLPs. This is (3R)-3-[(carboxymethyl)amino]fatty acid oxygenase/decarboxylase from Streptomyces coeruleorubidus.